The primary structure comprises 208 residues: Urease accessory protein UreG 2 (208 aa).

16–23 (GPVGSGKT) lines the GTP pocket.

Belongs to the SIMIBI class G3E GTPase family. UreG subfamily. Homodimer. UreD, UreF and UreG form a complex that acts as a GTP-hydrolysis-dependent molecular chaperone, activating the urease apoprotein by helping to assemble the nickel containing metallocenter of UreC. The UreE protein probably delivers the nickel.

It localises to the cytoplasm. In terms of biological role, facilitates the functional incorporation of the urease nickel metallocenter. This process requires GTP hydrolysis, probably effectuated by UreG. The protein is Urease accessory protein UreG 2 of Methylobacterium radiotolerans (strain ATCC 27329 / DSM 1819 / JCM 2831 / NBRC 15690 / NCIMB 10815 / 0-1).